Consider the following 325-residue polypeptide: 4-hydroxy-3-methylbut-2-enyl diphosphate reductase (325 aa).

Position 25 (cysteine 25) interacts with [4Fe-4S] cluster. Histidine 54 and histidine 87 together coordinate (2E)-4-hydroxy-3-methylbut-2-enyl diphosphate. Histidine 54 and histidine 87 together coordinate dimethylallyl diphosphate. Isopentenyl diphosphate is bound by residues histidine 54 and histidine 87. Residue cysteine 109 coordinates [4Fe-4S] cluster. Histidine 137 is a binding site for (2E)-4-hydroxy-3-methylbut-2-enyl diphosphate. Histidine 137 provides a ligand contact to dimethylallyl diphosphate. Residue histidine 137 coordinates isopentenyl diphosphate. Glutamate 139 acts as the Proton donor in catalysis. Threonine 179 contacts (2E)-4-hydroxy-3-methylbut-2-enyl diphosphate. [4Fe-4S] cluster is bound at residue cysteine 209. Residues serine 237, serine 238, asparagine 239, and serine 282 each contribute to the (2E)-4-hydroxy-3-methylbut-2-enyl diphosphate site. Positions 237, 238, 239, and 282 each coordinate dimethylallyl diphosphate. The isopentenyl diphosphate site is built by serine 237, serine 238, asparagine 239, and serine 282.

Belongs to the IspH family. Requires [4Fe-4S] cluster as cofactor.

The catalysed reaction is isopentenyl diphosphate + 2 oxidized [2Fe-2S]-[ferredoxin] + H2O = (2E)-4-hydroxy-3-methylbut-2-enyl diphosphate + 2 reduced [2Fe-2S]-[ferredoxin] + 2 H(+). It carries out the reaction dimethylallyl diphosphate + 2 oxidized [2Fe-2S]-[ferredoxin] + H2O = (2E)-4-hydroxy-3-methylbut-2-enyl diphosphate + 2 reduced [2Fe-2S]-[ferredoxin] + 2 H(+). Its pathway is isoprenoid biosynthesis; dimethylallyl diphosphate biosynthesis; dimethylallyl diphosphate from (2E)-4-hydroxy-3-methylbutenyl diphosphate: step 1/1. The protein operates within isoprenoid biosynthesis; isopentenyl diphosphate biosynthesis via DXP pathway; isopentenyl diphosphate from 1-deoxy-D-xylulose 5-phosphate: step 6/6. Its function is as follows. Catalyzes the conversion of 1-hydroxy-2-methyl-2-(E)-butenyl 4-diphosphate (HMBPP) into a mixture of isopentenyl diphosphate (IPP) and dimethylallyl diphosphate (DMAPP). Acts in the terminal step of the DOXP/MEP pathway for isoprenoid precursor biosynthesis. The protein is 4-hydroxy-3-methylbut-2-enyl diphosphate reductase of Corynebacterium glutamicum (strain ATCC 13032 / DSM 20300 / JCM 1318 / BCRC 11384 / CCUG 27702 / LMG 3730 / NBRC 12168 / NCIMB 10025 / NRRL B-2784 / 534).